An 86-amino-acid chain; its full sequence is Large ribosomal subunit protein bL27 (86 aa).

Belongs to the bacterial ribosomal protein bL27 family.

This Koribacter versatilis (strain Ellin345) protein is Large ribosomal subunit protein bL27.